Reading from the N-terminus, the 551-residue chain is MTRYLFITGGVVSSLGKGISAASLGTILQARGLSVTLIKLDPYINVDPGTMSPFQHGEVYVTDDGAETDLDLGHYERFVRAPVSRRNNFTTGRIYESVIRKERRGDYLGGTVQVIPHVTDEIKRCIQEGADDVDVALVEIGGTVGDIESLPFLEAIRQMGTELGRERCMFMHLTLVPFIGTAGEMKTKPTQHSVKELRSIGIQPDILVCRAAHPIPEEERRKIALFTNVEPRAVIAALDVPNIYQIPEELHQQGLDHIVAEKWGLELPPANLADWHRVVEIMSNPEGEVTVAMVGKYVDLTDAYMSLNEALRHAGIQTRQRVNIRYVDSESLEREGCSALEGADAILVPGGFGQRGIEGKIEAVRFARESRIPYLGICLGMQLAVIEYARHQAGLENAHSTEFVRHPHHPVIGLITEWMTDEGEVEQRDEADDLGGTMRLGGQPCRLAAGTLINQVYGKDRIVERHRHRYEFNNHYRERLAEAGLSFSGWSQDGRLVEVVELPEHPWFIGCQFHPEFTSTPRDGHPLFASFLRAAIAHRDGTAQAFNHEQH.

The amidoligase domain stretch occupies residues 1-265; the sequence is MTRYLFITGG…DHIVAEKWGL (265 aa). S13 lines the CTP pocket. Residue S13 coordinates UTP. ATP contacts are provided by residues 14-19 and D71; that span reads SLGKGI. Residues D71 and E139 each coordinate Mg(2+). CTP contacts are provided by residues 146 to 148, 186 to 191, and K222; these read DIE and KTKPTQ. UTP contacts are provided by residues 186 to 191 and K222; that span reads KTKPTQ. Positions 290 to 541 constitute a Glutamine amidotransferase type-1 domain; it reads TVAMVGKYVD…LRAAIAHRDG (252 aa). G351 contributes to the L-glutamine binding site. C378 (nucleophile; for glutamine hydrolysis) is an active-site residue. Residues 379–382, E402, and R469 each bind L-glutamine; that span reads LGMQ. Active-site residues include H514 and E516.

Belongs to the CTP synthase family. In terms of assembly, homotetramer.

It catalyses the reaction UTP + L-glutamine + ATP + H2O = CTP + L-glutamate + ADP + phosphate + 2 H(+). It carries out the reaction L-glutamine + H2O = L-glutamate + NH4(+). The catalysed reaction is UTP + NH4(+) + ATP = CTP + ADP + phosphate + 2 H(+). Its pathway is pyrimidine metabolism; CTP biosynthesis via de novo pathway; CTP from UDP: step 2/2. With respect to regulation, allosterically activated by GTP, when glutamine is the substrate; GTP has no effect on the reaction when ammonia is the substrate. The allosteric effector GTP functions by stabilizing the protein conformation that binds the tetrahedral intermediate(s) formed during glutamine hydrolysis. Inhibited by the product CTP, via allosteric rather than competitive inhibition. Catalyzes the ATP-dependent amination of UTP to CTP with either L-glutamine or ammonia as the source of nitrogen. Regulates intracellular CTP levels through interactions with the four ribonucleotide triphosphates. This chain is CTP synthase, found in Halorhodospira halophila (strain DSM 244 / SL1) (Ectothiorhodospira halophila (strain DSM 244 / SL1)).